A 648-amino-acid chain; its full sequence is Phosphatidylinositol polyphosphate 5-phosphatase type IV (648 aa).

The segment at 1–64 is disordered; that stretch reads MPSKSACLRH…PLSMPAKPSN (64 aa). Residues 36-54 are compositionally biased toward polar residues; it reads TSASLPAADSQSSQTNSMP. A run of 2 repeats spans residues 59–62 and 76–79. Positions 59 to 243 are 4 X 4 AA repeats of P-X-X-P; it reads PAKPSNQNLQ…AHSNLGPSRP (185 aa). The segment at 99–158 is disordered; the sequence is RFRGSQEDLTVQNGASPCRGSLQDSVAQSPAYSRPLPCLSTSLQEIPKPRRATGSEGGSP. A Phosphoserine modification is found at Ser103. Residues 120 to 129 are compositionally biased toward polar residues; sequence LQDSVAQSPA. Copy 3 of the repeat occupies 147-150; that stretch reads PRRA. At Thr197 the chain carries Phosphothreonine. The stretch at 240-243 is repeat 4; the sequence is PSRP. Ser245 and Ser260 each carry phosphoserine. Cys645 is subject to Cysteine methyl ester. Cys645 is lipidated: S-farnesyl cysteine. The propeptide at 646–648 is removed in mature form; the sequence is TVS.

It belongs to the inositol 1,4,5-trisphosphate 5-phosphatase type IV family. Interacts (when prenylated) with PDE6D; this is important for normal location in cilia.

It localises to the cytoplasm. The protein localises to the cytoskeleton. Its subcellular location is the cilium axoneme. The protein resides in the golgi apparatus. It is found in the golgi stack membrane. It localises to the cell membrane. The protein localises to the cell projection. Its subcellular location is the ruffle. The protein resides in the nucleus. The enzyme catalyses a 1,2-diacyl-sn-glycero-3-phospho-(1D-myo-inositol-4,5-bisphosphate) + H2O = a 1,2-diacyl-sn-glycero-3-phospho-(1D-myo-inositol 4-phosphate) + phosphate. It carries out the reaction a 1,2-diacyl-sn-glycero-3-phospho-(1D-myo-inositol-3,4,5-trisphosphate) + H2O = a 1,2-diacyl-sn-glycero-3-phospho-(1D-myo-inositol-3,4-bisphosphate) + phosphate. The catalysed reaction is a 1,2-diacyl-sn-glycero-3-phospho-(1D-myo-inositol-3,5-bisphosphate) + H2O = a 1,2-diacyl-sn-glycero-3-phospho-(1D-myo-inositol-3-phosphate) + phosphate. Its function is as follows. Phosphatidylinositol (PtdIns) phosphatase that specifically hydrolyzes the 5-phosphate of phosphatidylinositol-3,4,5-trisphosphate (PtdIns(3,4,5)P3), phosphatidylinositol 4,5-bisphosphate PtdIns (4,5)P2 and phosphatidylinositol 3,5-bisphosphate (PtdIns(3,5)P2). Specific for lipid substrates, inactive towards water soluble inositol phosphates. Plays an essential role in the primary cilium by controlling ciliary growth and phosphoinositide 3-kinase (PI3K) signaling and stability. The chain is Phosphatidylinositol polyphosphate 5-phosphatase type IV (Inpp5e) from Rattus norvegicus (Rat).